Here is a 429-residue protein sequence, read N- to C-terminus: Protein cereblon (429 aa).

The segment at 1-30 is disordered; sequence MGNHLPLLPAESEEEDEMEVEDQDSKEAKK. The segment covering 11–22 has biased composition (acidic residues); the sequence is ESEEEDEMEVED. Ser12 is subject to Phosphoserine. The Lon N-terminal domain maps to 68 to 306; it reads IPVLPQVMMI…CELDIMNKCT (239 aa). A CULT domain is found at 305–413; the sequence is CTSLCCKQCQ…LTRSALLPTI (109 aa). Residues Cys310 and Cys313 each contribute to the Zn(2+) site. (S)-thalidomide is bound by residues His365, Trp367, and Trp373. Zn(2+)-binding residues include Cys378 and Cys381.

This sequence belongs to the CRBN family. Component of a DCX (DDB1-CUL4-X-box) protein ligase complex, at least composed of CRBN, CUL4A, DDB1 and RBX1. Interacts directly with DDB1. Interacts with KCNT1. Interacts with ILF2. Interacts with TRAF6 and ECSIT. Post-translationally, ubiquitinated, ubiquitination is mediated by its own DCX protein ligase complex.

It is found in the cytoplasm. It localises to the nucleus. Its subcellular location is the membrane. It participates in protein modification; protein ubiquitination. Substrate recognition component of a DCX (DDB1-CUL4-X-box) E3 protein ligase complex that mediates the ubiquitination and subsequent proteasomal degradation of target proteins, such as MEIS2, ILF2 or GLUL. Normal degradation of key regulatory proteins is required for normal limb outgrowth and expression of the fibroblast growth factor FGF8. Maintains presynaptic glutamate release and consequently cognitive functions, such as memory and learning, by negatively regulating large-conductance calcium-activated potassium (BK) channels in excitatory neurons. Likely to function by regulating the assembly and neuronal surface expression of BK channels via its interaction with KCNT1. May also be involved in regulating anxiety-like behaviors via a BK channel-independent mechanism. Plays a negative role in TLR4 signaling by interacting with TRAF6 and ECSIT, leading to inhibition of ECSIT ubiquitination, an important step of the signaling. This chain is Protein cereblon (CRBN), found in Pongo abelii (Sumatran orangutan).